The following is a 158-amino-acid chain: Leptin-B (158 aa).

A signal peptide spans Met-1–Thr-19. Cys-114 and Cys-158 are disulfide-bonded.

The protein belongs to the leptin family. In terms of tissue distribution, highly expressed in the brain and eye. Expressed at low levels in muscle and skin.

Its subcellular location is the secreted. Its function is as follows. May function as part of a signaling pathway that acts to regulate the size of the body fat depot. This chain is Leptin-B, found in Oryzias latipes (Japanese rice fish).